The primary structure comprises 75 residues: Small ribosomal subunit protein bS18c (75 aa).

This sequence belongs to the bacterial ribosomal protein bS18 family. As to quaternary structure, part of the 30S ribosomal subunit.

The protein resides in the plastid. Its subcellular location is the chloroplast. The sequence is that of Small ribosomal subunit protein bS18c (rps18) from Anthoceros angustus (Hornwort).